A 531-amino-acid chain; its full sequence is Polypyrimidine tract-binding protein 2 (531 aa).

Met-1 carries the post-translational modification N-acetylmethionine. 2 positions are modified to phosphoserine: Ser-26 and Ser-27. RRM domains lie at 59-133 and 181-257; these read RVLH…YSNH and LRII…FSKL. A Phosphoserine modification is found at Ser-308. 2 RRM domains span residues 338–412 and 455–529; these read TVLL…LSKH and ATLH…FSKS.

In terms of assembly, monomer. Interacts with NOVA1; the interaction is direct. Identified in a mRNP complex, at least composed of DHX9, DDX3X, ELAVL1, HNRNPU, IGF2BP1, ILF3, PABPC1, PCBP2, PTBP2, STAU1, STAU2, SYNCRIP and YBX1. Part of a ternary complex containing KHSRP and HNRPH1. Interacts with NOVA2; the interaction is direct. As to expression, mainly expressed in brain although also detected in other tissues like heart and skeletal muscle. Isoform 1 and isoform 2 are specifically expressed in neuronal tissues. Isoform 3 and isoform 4 are expressed in non-neuronal tissues. Isoform 5 and isoform 6 are truncated forms expressed in non-neuronal tissues.

The protein localises to the nucleus. Functionally, RNA-binding protein which binds to intronic polypyrimidine tracts and mediates negative regulation of exons splicing. May antagonize in a tissue-specific manner the ability of NOVA1 to activate exon selection. In addition to its function in pre-mRNA splicing, plays also a role in the regulation of translation. Reduced affinity for RNA. The protein is Polypyrimidine tract-binding protein 2 of Homo sapiens (Human).